A 141-amino-acid polypeptide reads, in one-letter code: Aspartate 1-decarboxylase (141 aa).

Residue Ser25 is the Schiff-base intermediate with substrate; via pyruvic acid of the active site. Ser25 carries the pyruvic acid (Ser) modification. Thr57 is a binding site for substrate. Tyr58 (proton donor) is an active-site residue. 73–75 lines the substrate pocket; it reads GAA.

It belongs to the PanD family. Heterooctamer of four alpha and four beta subunits. Requires pyruvate as cofactor. Post-translationally, is synthesized initially as an inactive proenzyme, which is activated by self-cleavage at a specific serine bond to produce a beta-subunit with a hydroxyl group at its C-terminus and an alpha-subunit with a pyruvoyl group at its N-terminus.

The protein localises to the cytoplasm. The enzyme catalyses L-aspartate + H(+) = beta-alanine + CO2. The protein operates within cofactor biosynthesis; (R)-pantothenate biosynthesis; beta-alanine from L-aspartate: step 1/1. Its function is as follows. Catalyzes the pyruvoyl-dependent decarboxylation of aspartate to produce beta-alanine. This chain is Aspartate 1-decarboxylase, found in Salinispora arenicola (strain CNS-205).